The sequence spans 245 residues: Cysteine-rich secretory protein 3 (245 aa).

An N-terminal signal peptide occupies residues 1–22 (MALLPVLLFLAAVLLPFFPASG). The SCP domain occupies 42–171 (VNKHNDLRRT…TLKYYYVCQY (130 aa)). Cystine bridges form between Cys-191–Cys-198, Cys-194–Cys-203, Cys-207–Cys-240, Cys-216–Cys-234, and Cys-225–Cys-238. In terms of domain architecture, ShKT spans 207–240 (CEYEDLVSNCDSLKKIAGCEHELLKENCKTTCQC).

The protein belongs to the CRISP family. In terms of assembly, interacts with A1BG. In terms of tissue distribution, expressed in the salivary gland, in the ampulla and the seminal vesicle.

It localises to the secreted. The sequence is that of Cysteine-rich secretory protein 3 (CRISP3) from Equus caballus (Horse).